The following is a 281-amino-acid chain: Deoxyribonuclease-1 (281 aa).

Residues 1–21 form the signal peptide; sequence MRSEMLTALLTLAVLLQVAGS. The N-linked (GlcNAc...) asparagine glycan is linked to asparagine 39. Glutamate 99 is a catalytic residue. An intrachain disulfide couples cysteine 122 to cysteine 125. Histidine 155 is a catalytic residue.

It belongs to the DNase I family. Requires Ca(2+) as cofactor. Mg(2+) is required as a cofactor. As to expression, equivalent levels in pancreas and parotid gland, low amounts in kidney, liver, small intestine, stomach and thymus.

It localises to the secreted. The protein resides in the zymogen granule. The protein localises to the nucleus envelope. The enzyme catalyses Endonucleolytic cleavage to 5'-phosphodinucleotide and 5'-phosphooligonucleotide end-products.. In terms of biological role, serum endocuclease secreted into body fluids by a wide variety of exocrine and endocrine organs. Expressed by non-hematopoietic tissues and preferentially cleaves protein-free DNA. Among other functions, seems to be involved in cell death by apoptosis. Binds specifically to G-actin and blocks actin polymerization. Preferentially attacks double-stranded DNA and produces oligonucleotides with 5'-phospho and 3'-hydroxy termini. Together with DNASE1L3, plays a key role in degrading neutrophil extracellular traps (NETs). NETs are mainly composed of DNA fibers and are released by neutrophils to bind pathogens during inflammation. Degradation of intravascular NETs by DNASE1 and DNASE1L3 is required to prevent formation of clots that obstruct blood vessels and cause organ damage following inflammation. In Oryctolagus cuniculus (Rabbit), this protein is Deoxyribonuclease-1 (DNASE1).